Consider the following 520-residue polypeptide: Arabinose import ATP-binding protein AraG (520 aa).

Polar residues predominate over residues 1–10 (MTTQTMTAVS). The disordered stretch occupies residues 1–27 (MTTQTMTAVSGNDGDTGGDAAESPPGG). ABC transporter domains lie at 30–265 (LALD…MVGR) and 265–516 (RSIE…LIKL). 62 to 69 (GENGAGKS) provides a ligand contact to ATP.

The protein belongs to the ABC transporter superfamily. Arabinose importer (TC 3.A.1.2.2) family. As to quaternary structure, the complex is composed of two ATP-binding proteins (AraG), two transmembrane proteins (AraH) and a solute-binding protein (AraF).

It is found in the cell inner membrane. The enzyme catalyses L-arabinose(out) + ATP + H2O = L-arabinose(in) + ADP + phosphate + H(+). Functionally, part of the ABC transporter complex AraFGH involved in L-arabinose import. Responsible for energy coupling to the transport system. This chain is Arabinose import ATP-binding protein AraG, found in Azospirillum brasilense.